The following is a 474-amino-acid chain: tRNA-2-methylthio-N(6)-dimethylallyladenosine synthase (474 aa).

Residues 3-120 (KKLHIKTWGC…LPEMINSVRG (118 aa)) enclose the MTTase N-terminal domain. Residues Cys-12, Cys-49, Cys-83, Cys-157, Cys-161, and Cys-164 each coordinate [4Fe-4S] cluster. The region spanning 143-375 (RAEGPTAFVS…QERINQQAMA (233 aa)) is the Radical SAM core domain. Residues 378–441 (RRMLGTTQRI…PNSLRGKVVR (64 aa)) enclose the TRAM domain.

The protein belongs to the methylthiotransferase family. MiaB subfamily. Monomer. It depends on [4Fe-4S] cluster as a cofactor.

It localises to the cytoplasm. The catalysed reaction is N(6)-dimethylallyladenosine(37) in tRNA + (sulfur carrier)-SH + AH2 + 2 S-adenosyl-L-methionine = 2-methylsulfanyl-N(6)-dimethylallyladenosine(37) in tRNA + (sulfur carrier)-H + 5'-deoxyadenosine + L-methionine + A + S-adenosyl-L-homocysteine + 2 H(+). Catalyzes the methylthiolation of N6-(dimethylallyl)adenosine (i(6)A), leading to the formation of 2-methylthio-N6-(dimethylallyl)adenosine (ms(2)i(6)A) at position 37 in tRNAs that read codons beginning with uridine. The polypeptide is tRNA-2-methylthio-N(6)-dimethylallyladenosine synthase (Escherichia coli O81 (strain ED1a)).